Here is a 452-residue protein sequence, read N- to C-terminus: Adenylyltransferase and sulfurtransferase MOCS3 (452 aa).

ATP is bound by residues Gly-99, Asp-120, 127–131 (SNLHR), Lys-144, and 188–189 (DN). The Zn(2+) site is built by Cys-230 and Cys-233. Catalysis depends on Cys-247, which acts as the Glycyl thioester intermediate; for adenylyltransferase activity. Positions 305 and 308 each coordinate Zn(2+). In terms of domain architecture, Rhodanese spans 354–450 (KTKAHLLLDV…WTNQVDQSFP (97 aa)). Cys-409 acts as the Cysteine persulfide intermediate; for sulfurtransferase activity in catalysis.

This sequence in the N-terminal section; belongs to the HesA/MoeB/ThiF family. UBA4 subfamily. Zn(2+) serves as cofactor.

Its subcellular location is the cytoplasm. It is found in the cytosol. The enzyme catalyses [molybdopterin-synthase sulfur-carrier protein]-C-terminal Gly-Gly + ATP + H(+) = [molybdopterin-synthase sulfur-carrier protein]-C-terminal Gly-Gly-AMP + diphosphate. The catalysed reaction is [molybdopterin-synthase sulfur-carrier protein]-C-terminal Gly-Gly-AMP + S-sulfanyl-L-cysteinyl-[cysteine desulfurase] + AH2 = [molybdopterin-synthase sulfur-carrier protein]-C-terminal-Gly-aminoethanethioate + L-cysteinyl-[cysteine desulfurase] + A + AMP + 2 H(+). The protein operates within tRNA modification; 5-methoxycarbonylmethyl-2-thiouridine-tRNA biosynthesis. Its pathway is cofactor biosynthesis; molybdopterin biosynthesis. Functionally, plays a central role in 2-thiolation of mcm(5)S(2)U at tRNA wobble positions of cytosolic tRNA(Lys), tRNA(Glu) and tRNA(Gln). Also essential during biosynthesis of the molybdenum cofactor. Acts by mediating the C-terminal thiocarboxylation of sulfur carriers URM1 and MOCS2A. Its N-terminus first activates URM1 and MOCS2A as acyl-adenylates (-COAMP), then the persulfide sulfur on the catalytic cysteine is transferred to URM1 and MOCS2A to form thiocarboxylation (-COSH) of their C-terminus. The reaction probably involves hydrogen sulfide that is generated from the persulfide intermediate and that acts as a nucleophile towards URM1 and MOCS2A. Subsequently, a transient disulfide bond is formed. Does not use thiosulfate as sulfur donor; NFS1 probably acting as a sulfur donor for thiocarboxylation reactions. The sequence is that of Adenylyltransferase and sulfurtransferase MOCS3 from Drosophila virilis (Fruit fly).